A 328-amino-acid chain; its full sequence is uncharacterized protein (328 aa).

Residues 10 to 55 (KMGFGHAMLLKMGWKGKGLGVEEDGRTEIIVNKKKQDKVGVGASIS) form the G-patch domain. The disordered stretch occupies residues 97 to 291 (EKITFKRTIK…KKSFSVSKTR (195 aa)). Residues 101-110 (FKRTIKKNSK) show a composition bias toward basic residues. A compositionally biased stretch (acidic residues) spans 116-126 (SDSDSDSDSES). Composition is skewed to low complexity over residues 141 to 158 (DSDS…SSSS) and 210 to 240 (SSSS…SSSE). Over residues 248 to 257 (KNKNKNKNKK) the composition is skewed to basic residues.

This is an uncharacterized protein from Dictyostelium discoideum (Social amoeba).